Consider the following 393-residue polypeptide: S-adenosylmethionine synthase 2 (393 aa).

Residue Glu-9 coordinates Mg(2+). Residue His-15 coordinates ATP. Glu-43 is a K(+) binding site. L-methionine-binding residues include Glu-56 and Gln-99. Residues 167-169, 235-238, Asp-246, 252-253, Ala-269, Lys-273, and Lys-277 contribute to the ATP site; these read DGK, SGRF, and RK. Asp-246 is an L-methionine binding site. Lys-277 serves as a coordination point for L-methionine.

It belongs to the AdoMet synthase family. In terms of assembly, homotetramer. Mn(2+) serves as cofactor. The cofactor is Mg(2+). Co(2+) is required as a cofactor. Requires K(+) as cofactor. As to expression, mostly expressed in flowers, seedpods and roots, and, to a lower extent, in stems and leaves.

It localises to the cytoplasm. The enzyme catalyses L-methionine + ATP + H2O = S-adenosyl-L-methionine + phosphate + diphosphate. It functions in the pathway amino-acid biosynthesis; S-adenosyl-L-methionine biosynthesis; S-adenosyl-L-methionine from L-methionine: step 1/1. Its function is as follows. Catalyzes the formation of S-adenosylmethionine from methionine and ATP. The reaction comprises two steps that are both catalyzed by the same enzyme: formation of S-adenosylmethionine (AdoMet) and triphosphate, and subsequent hydrolysis of the triphosphate. This Brassica juncea (Indian mustard) protein is S-adenosylmethionine synthase 2 (MSAMS2).